The primary structure comprises 559 residues: Palmitoyltransferase AKR1 (559 aa).

ANK repeat units lie at residues 8–38 (QGFN…PVDT), 42–71 (LGHT…RVDT), and 75–104 (EGFT…DIKA). 3 helical membrane-spanning segments follow: residues 148–168 (LMVL…FLFG), 192–212 (TAVF…YLLG), and 217–237 (LLWM…FFYG). Positions 272-322 (HFCVSCIAQRPLRSKHCKFCNRCVAKFDHHCPWIYNCIGAKNHRAFLIFLA) constitute a DHHC domain. Cysteine 302 (S-palmitoyl cysteine intermediate) is an active-site residue. A run of 2 helical transmembrane segments spans residues 316–336 (AFLI…YLSF) and 373–393 (LAFW…VQLY).

Belongs to the DHHC palmitoyltransferase family. AKR/ZDHHC17 subfamily.

It localises to the early endosome membrane. The protein localises to the golgi apparatus membrane. It carries out the reaction L-cysteinyl-[protein] + hexadecanoyl-CoA = S-hexadecanoyl-L-cysteinyl-[protein] + CoA. In terms of biological role, palmitoyltransferase specific for casein kinase 1. The polypeptide is Palmitoyltransferase AKR1 (Mortierella alpina (Oleaginous fungus)).